A 602-amino-acid polypeptide reads, in one-letter code: uncharacterized protein (602 aa).

Positions 51–210 (QYLGTQPRDF…PFVSYQPDAD (160 aa)) constitute a Helicase ATP-binding domain. Basic and acidic residues predominate over residues 430 to 439 (PHRESAHDPL). 2 disordered regions span residues 430–452 (PHRE…TERG) and 518–538 (RAQL…ASVH). A compositionally biased stretch (polar residues) spans 523–534 (KGATQPATSGAS).

It to M.leprae ML1624.

This is an uncharacterized protein from Mycobacterium tuberculosis (strain ATCC 25618 / H37Rv).